We begin with the raw amino-acid sequence, 217 residues long: Proteasome subunit beta type-9 (217 aa).

Residues 1–18 (MLEESSEPGWLSEEVKTG) constitute a propeptide, removed in mature form. Thr19 functions as the Nucleophile in the catalytic mechanism.

The protein belongs to the peptidase T1B family. The 26S proteasome consists of a 20S proteasome core and two 19S regulatory subunits. The 20S proteasome core is composed of 28 subunits that are arranged in four stacked rings, resulting in a barrel-shaped structure. The two end rings are each formed by seven alpha subunits, and the two central rings are each formed by seven beta subunits. The catalytic chamber with the active sites is on the inside of the barrel. Component of the immunoproteasome, where it displaces the equivalent housekeeping subunit PSMB6. Post-translationally, autocleaved. The resulting N-terminal Thr residue of the mature subunit is responsible for the nucleophile proteolytic activity.

The protein localises to the cytoplasm. Its subcellular location is the nucleus. It carries out the reaction Cleavage of peptide bonds with very broad specificity.. Its function is as follows. The proteasome is a multicatalytic proteinase complex which is characterized by its ability to cleave peptides with Arg, Phe, Tyr, Leu, and Glu adjacent to the leaving group at neutral or slightly basic pH. The proteasome has an ATP-dependent proteolytic activity. This subunit is involved in antigen processing to generate class I binding peptides. This is Proteasome subunit beta type-9 (psmb9-a) from Salmo salar (Atlantic salmon).